The following is a 387-amino-acid chain: Succinate--CoA ligase [ADP-forming] subunit beta (387 aa).

The 228-residue stretch at 9 to 236 (RDLFESYGVP…AAAADPLEAK (228 aa)) folds into the ATP-grasp domain. Residues K45, 52–54 (GRG), A94, and E99 each bind ATP. Residues N191 and D205 each contribute to the Mg(2+) site. Residues N256 and 318 to 320 (GIT) each bind substrate.

The protein belongs to the succinate/malate CoA ligase beta subunit family. Heterotetramer of two alpha and two beta subunits. Mg(2+) serves as cofactor.

The catalysed reaction is succinate + ATP + CoA = succinyl-CoA + ADP + phosphate. The enzyme catalyses GTP + succinate + CoA = succinyl-CoA + GDP + phosphate. It functions in the pathway carbohydrate metabolism; tricarboxylic acid cycle; succinate from succinyl-CoA (ligase route): step 1/1. In terms of biological role, succinyl-CoA synthetase functions in the citric acid cycle (TCA), coupling the hydrolysis of succinyl-CoA to the synthesis of either ATP or GTP and thus represents the only step of substrate-level phosphorylation in the TCA. The beta subunit provides nucleotide specificity of the enzyme and binds the substrate succinate, while the binding sites for coenzyme A and phosphate are found in the alpha subunit. This Clavibacter michiganensis subsp. michiganensis (strain NCPPB 382) protein is Succinate--CoA ligase [ADP-forming] subunit beta.